Here is a 937-residue protein sequence, read N- to C-terminus: Molybdenum cofactor sulfurase (937 aa).

Lys237 carries the post-translational modification N6-(pyridoxal phosphate)lysine. Cys397 is an active-site residue. Disordered stretches follow at residues 633-710 (GQGK…RRIL), 756-795 (PSPS…KLNP), and 897-921 (KEGT…GGNG). Basic residues predominate over residues 638–652 (MTRHAKAHLQRHQHQ). An MOSC domain is found at 682–935 (TPPSPPDSDT…VRVGDVVRPS (254 aa)). The segment covering 756-767 (PSPSTPSASPSN) has biased composition (low complexity). Over residues 900 to 921 (TGMGMGTGTGTGTGTRSMGGNG) the composition is skewed to gly residues.

This sequence belongs to the class-V pyridoxal-phosphate-dependent aminotransferase family. MOCOS subfamily. Pyridoxal 5'-phosphate is required as a cofactor.

The catalysed reaction is Mo-molybdopterin + L-cysteine + AH2 = thio-Mo-molybdopterin + L-alanine + A + H2O. It functions in the pathway cofactor biosynthesis; molybdopterin biosynthesis. Sulfurates the molybdenum cofactor. Sulfation of molybdenum is essential for xanthine dehydrogenase (XDH) and aldehyde oxidase (ADO) enzymes in which molybdenum cofactor is liganded by 1 oxygen and 1 sulfur atom in active form. The sequence is that of Molybdenum cofactor sulfurase (nit-13) from Neurospora crassa (strain ATCC 24698 / 74-OR23-1A / CBS 708.71 / DSM 1257 / FGSC 987).